Consider the following 403-residue polypeptide: ATP phosphoribosyltransferase regulatory subunit (403 aa).

It belongs to the class-II aminoacyl-tRNA synthetase family. HisZ subfamily. In terms of assembly, heteromultimer composed of HisG and HisZ subunits.

It is found in the cytoplasm. It participates in amino-acid biosynthesis; L-histidine biosynthesis; L-histidine from 5-phospho-alpha-D-ribose 1-diphosphate: step 1/9. Required for the first step of histidine biosynthesis. May allow the feedback regulation of ATP phosphoribosyltransferase activity by histidine. The protein is ATP phosphoribosyltransferase regulatory subunit of Nostoc punctiforme (strain ATCC 29133 / PCC 73102).